The sequence spans 117 residues: Large ribosomal subunit protein uL24 (117 aa).

A compositionally biased stretch (basic residues) spans 1–10 (MSKQPRKQRK). The segment at 1 to 28 (MSKQPRKQRKALYTAPLHKRHNSMSVHL) is disordered.

It belongs to the universal ribosomal protein uL24 family. In terms of assembly, part of the 50S ribosomal subunit.

Its function is as follows. One of two assembly initiator proteins, it binds directly to the 5'-end of the 23S rRNA, where it nucleates assembly of the 50S subunit. Functionally, located at the polypeptide exit tunnel on the outside of the subunit. The sequence is that of Large ribosomal subunit protein uL24 from Methanosphaera stadtmanae (strain ATCC 43021 / DSM 3091 / JCM 11832 / MCB-3).